Consider the following 230-residue polypeptide: Ureidoacrylate amidohydrolase RutB (230 aa).

The Proton acceptor role is filled by D24. K133 is a catalytic residue. The active-site Nucleophile is C166.

Belongs to the isochorismatase family. RutB subfamily.

It carries out the reaction (Z)-3-ureidoacrylate + H2O + H(+) = (Z)-3-aminoacrylate + NH4(+) + CO2. It catalyses the reaction (Z)-3-ureidoacrylate + H2O = (Z)-3-aminoacrylate + carbamate + H(+). The enzyme catalyses (Z)-2-methylureidoacrylate + H2O + H(+) = (Z)-2-methylaminoacrylate + NH4(+) + CO2. Hydrolyzes ureidoacrylate to form aminoacrylate and carbamate. The carbamate hydrolyzes spontaneously, thereby releasing one of the nitrogen atoms of the pyrimidine ring as ammonia and one of its carbon atoms as CO2. The polypeptide is Ureidoacrylate amidohydrolase RutB (Escherichia coli O103:H2 (strain 12009 / EHEC)).